Reading from the N-terminus, the 407-residue chain is Multifunctional CCA protein (407 aa).

ATP is bound by residues Gly8 and Arg11. The CTP site is built by Gly8 and Arg11. The Mg(2+) site is built by Asp21 and Asp23. The ATP site is built by Arg91, Arg137, and Arg140. CTP contacts are provided by Arg91, Arg137, and Arg140. An HD domain is found at Thr228–Trp329.

This sequence belongs to the tRNA nucleotidyltransferase/poly(A) polymerase family. Bacterial CCA-adding enzyme type 1 subfamily. Monomer. Can also form homodimers and oligomers. Requires Mg(2+) as cofactor. Ni(2+) is required as a cofactor.

The enzyme catalyses a tRNA precursor + 2 CTP + ATP = a tRNA with a 3' CCA end + 3 diphosphate. It carries out the reaction a tRNA with a 3' CCA end + 2 CTP + ATP = a tRNA with a 3' CCACCA end + 3 diphosphate. Catalyzes the addition and repair of the essential 3'-terminal CCA sequence in tRNAs without using a nucleic acid template. Adds these three nucleotides in the order of C, C, and A to the tRNA nucleotide-73, using CTP and ATP as substrates and producing inorganic pyrophosphate. tRNA 3'-terminal CCA addition is required both for tRNA processing and repair. Also involved in tRNA surveillance by mediating tandem CCA addition to generate a CCACCA at the 3' terminus of unstable tRNAs. While stable tRNAs receive only 3'-terminal CCA, unstable tRNAs are marked with CCACCA and rapidly degraded. The protein is Multifunctional CCA protein of Aliivibrio fischeri (strain ATCC 700601 / ES114) (Vibrio fischeri).